Here is a 269-residue protein sequence, read N- to C-terminus: Shikimate dehydrogenase (NADP(+)) (269 aa).

Shikimate-binding positions include 13-15 (SLS) and Thr60. Lys64 functions as the Proton acceptor in the catalytic mechanism. NADP(+) is bound at residue Glu76. Positions 85 and 100 each coordinate shikimate. Residues 124-128 (GAGGA), 148-153 (NRTMSR), and Ile209 each bind NADP(+). Tyr211 contributes to the shikimate binding site. Position 232 (Gly232) interacts with NADP(+). Gln239 is a binding site for shikimate.

This sequence belongs to the shikimate dehydrogenase family. As to quaternary structure, monomer or homodimer.

The catalysed reaction is shikimate + NADP(+) = 3-dehydroshikimate + NADPH + H(+). It participates in metabolic intermediate biosynthesis; chorismate biosynthesis; chorismate from D-erythrose 4-phosphate and phosphoenolpyruvate: step 4/7. In terms of biological role, involved in the biosynthesis of the chorismate, which leads to the biosynthesis of aromatic amino acids. Catalyzes the reversible NADPH linked reduction of 3-dehydroshikimate (DHSA) to yield shikimate (SA). It can also use NAD to oxidize shikimate. This is Shikimate dehydrogenase (NADP(+)) from Staphylococcus epidermidis (strain ATCC 35984 / DSM 28319 / BCRC 17069 / CCUG 31568 / BM 3577 / RP62A).